Consider the following 184-residue polypeptide: MESFSSKSLALQAEKKLLSKMAGRSVAHLFIDETSSEVLDELYRVSKEYTHSRPQAQRVIKDLIKVAVKVAVLHRSGCFGSSELALATRFREKLRQGAMTALSFGEVDFTFEAAVLADLLTECRDVLLELVERHLTPKSHSRIRHVFDHFSDPGLLTALYGPEFTQHLGKICDGLRKLLDEGKL.

A Phosphoserine modification is found at Ser-3.

The protein belongs to the TNFAIP8 family. TNFAIP8L2 subfamily. As to quaternary structure, may interact with CASP8; however, such result is unclear since could not reproduce the interaction with CASP8. Interacts with RAC1. Phosphorylated by TAK1/MAP3K7; this phosphorylation triggers association with BTRC and subsequent ubiquitination and degradation. Post-translationally, ubiquitinated in a BTRC-depdent manner; leading to degradation mediated through the proteasome pathway.

It is found in the cytoplasm. It localises to the nucleus. The protein resides in the lysosome. Functionally, acts as a negative regulator of innate and adaptive immunity by maintaining immune homeostasis. Plays a regulatory role in the Toll-like signaling pathway by determining the strength of LPS-induced signaling and gene expression. Inhibits TCR-mediated T-cell activation and negatively regulate T-cell function to prevent hyperresponsiveness. Also inhibits autolysosome formation via negatively modulating MTOR activation by interacting with RAC1 and promoting the disassociation of the RAC1-MTOR complex. Plays an essential role in NK-cell biology by acting as a checkpoint and displaying an expression pattern correlating with NK-cell maturation process and by negatively regulating NK-cell maturation and antitumor immunity. Mechanistically, suppresses IL-15-triggered mTOR activity in NK-cells. This chain is Tumor necrosis factor alpha-induced protein 8-like protein 2 (TNFAIP8L2), found in Otolemur garnettii (Small-eared galago).